A 102-amino-acid polypeptide reads, in one-letter code: Large ribosomal subunit protein uL24 (102 aa).

The protein belongs to the universal ribosomal protein uL24 family. Part of the 50S ribosomal subunit.

Functionally, one of two assembly initiator proteins, it binds directly to the 5'-end of the 23S rRNA, where it nucleates assembly of the 50S subunit. In terms of biological role, one of the proteins that surrounds the polypeptide exit tunnel on the outside of the subunit. This Rhizobium etli (strain CIAT 652) protein is Large ribosomal subunit protein uL24.